The primary structure comprises 122 residues: Large ribosomal subunit protein uL14 (122 aa).

The protein belongs to the universal ribosomal protein uL14 family. As to quaternary structure, part of the 50S ribosomal subunit. Forms a cluster with proteins L3 and L19. In the 70S ribosome, L14 and L19 interact and together make contacts with the 16S rRNA in bridges B5 and B8.

Binds to 23S rRNA. Forms part of two intersubunit bridges in the 70S ribosome. The polypeptide is Large ribosomal subunit protein uL14 (Saccharopolyspora erythraea (strain ATCC 11635 / DSM 40517 / JCM 4748 / NBRC 13426 / NCIMB 8594 / NRRL 2338)).